The sequence spans 214 residues: Large ribosomal subunit protein uL3 (214 aa).

Residues 131–155 (GAQRTSHGNSRSHRVPGSIGMAQDP) are disordered. Glutamine 153 bears the N5-methylglutamine mark.

The protein belongs to the universal ribosomal protein uL3 family. Part of the 50S ribosomal subunit. Forms a cluster with proteins L14 and L19. In terms of processing, methylated by PrmB.

In terms of biological role, one of the primary rRNA binding proteins, it binds directly near the 3'-end of the 23S rRNA, where it nucleates assembly of the 50S subunit. In Neisseria meningitidis serogroup C (strain 053442), this protein is Large ribosomal subunit protein uL3.